Consider the following 425-residue polypeptide: Serine--tRNA ligase (425 aa).

230–232 (TAE) is a binding site for L-serine. 261 to 263 (RSE) is an ATP binding site. L-serine is bound at residue Glu284. 348-351 (EISS) contacts ATP. Ser384 contacts L-serine.

It belongs to the class-II aminoacyl-tRNA synthetase family. Type-1 seryl-tRNA synthetase subfamily. Homodimer. The tRNA molecule binds across the dimer.

It is found in the cytoplasm. The catalysed reaction is tRNA(Ser) + L-serine + ATP = L-seryl-tRNA(Ser) + AMP + diphosphate + H(+). It catalyses the reaction tRNA(Sec) + L-serine + ATP = L-seryl-tRNA(Sec) + AMP + diphosphate + H(+). It participates in aminoacyl-tRNA biosynthesis; selenocysteinyl-tRNA(Sec) biosynthesis; L-seryl-tRNA(Sec) from L-serine and tRNA(Sec): step 1/1. Its function is as follows. Catalyzes the attachment of serine to tRNA(Ser). Is also able to aminoacylate tRNA(Sec) with serine, to form the misacylated tRNA L-seryl-tRNA(Sec), which will be further converted into selenocysteinyl-tRNA(Sec). The protein is Serine--tRNA ligase of Streptococcus equi subsp. zooepidemicus (strain H70).